A 266-amino-acid chain; its full sequence is MEGVNAKKQKHFVLVHGAGHGAWCWYKLKPLLESSGHKVTAIDLLASGINTKRLDEVDTLRDYSLPLLELMAAIPPDEKVILVGHSFGGFSTAIAMEHYPEKISIAVFIASVMPDAVHPPSYFFNLVFEWSPKDEDPLDTKIEPYGNPDQPRTAIRYGPKYLSSKIYQNCTTEEIELANLLLRPIYLFAEDLSKAKAFSAKGYGSVKRAYIVCSEDKSFPVGFQHWLVENVGVIEAKEIKDADHMAMISKPQRLRQCLQEIADKVV.

The AB hydrolase-1 domain occupies 11–121 (HFVLVHGAGH…VMPDAVHPPS (111 aa)). Catalysis depends on residues Ser86, Asp216, and His244.

The protein belongs to the AB hydrolase superfamily. As to quaternary structure, homodimer. In terms of tissue distribution, mainly expressed in roots.

It catalyses the reaction 17-dehydropreakuammicine + H2O = norfluorocurarine + methanol + CO2. It functions in the pathway alkaloid biosynthesis. In terms of biological role, hydrolase involved in the biosynthesis of curare monoterpene indole alkaloids (MIAs), natural products such as strychnine, a neurotoxic compound used as a pesticide to control rodents, and its pharmacologically active derivatives, including brucine, used to regulate blood pressure. Curare alkaloids act as animal glycine receptor antagonists. Catalyzes the conversion of dehydropreakuammicine to norfluorocurarine. The protein is Norfluorocurarine synthase 1 of Strychnos nux-vomica (Poison nut).